Reading from the N-terminus, the 358-residue chain is Methylthioribose-1-phosphate isomerase (358 aa).

Substrate contacts are provided by residues arginine 54–alanine 56, arginine 96, and glutamine 205. Catalysis depends on aspartate 246, which acts as the Proton donor. Asparagine 256–lysine 257 is a binding site for substrate.

This sequence belongs to the eIF-2B alpha/beta/delta subunits family. MtnA subfamily.

The enzyme catalyses 5-(methylsulfanyl)-alpha-D-ribose 1-phosphate = 5-(methylsulfanyl)-D-ribulose 1-phosphate. It functions in the pathway amino-acid biosynthesis; L-methionine biosynthesis via salvage pathway; L-methionine from S-methyl-5-thio-alpha-D-ribose 1-phosphate: step 1/6. Catalyzes the interconversion of methylthioribose-1-phosphate (MTR-1-P) into methylthioribulose-1-phosphate (MTRu-1-P). The polypeptide is Methylthioribose-1-phosphate isomerase (Pseudomonas syringae pv. tomato (strain ATCC BAA-871 / DC3000)).